The chain runs to 129 residues: Photosystem II reaction center Psb28 protein (129 aa).

The disordered stretch occupies residues 110–129; the sequence is GLGYSNNSGNNEGADEASEG.

It belongs to the Psb28 family. As to quaternary structure, part of the photosystem II complex.

It is found in the cellular thylakoid membrane. The sequence is that of Photosystem II reaction center Psb28 protein from Synechococcus sp. (strain WH7803).